Consider the following 314-residue polypeptide: DNA topoisomerase 1 (314 aa).

Residues 73 to 314 (GKMHVQRRNS…TDYITNTQTV (242 aa)) form the Topo IB-type catalytic domain. Catalysis depends on Y273, which acts as the O-(3'-phospho-DNA)-tyrosine intermediate.

The protein belongs to the type IB topoisomerase family.

The catalysed reaction is ATP-independent breakage of single-stranded DNA, followed by passage and rejoining.. Functionally, releases the supercoiling and torsional tension of DNA introduced during the DNA replication and transcription by transiently cleaving and rejoining one strand of the DNA duplex. Introduces a single-strand break via transesterification at a target site in duplex DNA. The scissile phosphodiester is attacked by the catalytic tyrosine of the enzyme, resulting in the formation of a DNA-(3'-phosphotyrosyl)-enzyme intermediate and the expulsion of a 5'-OH DNA strand. The free DNA strand then undergoes passage around the unbroken strand thus removing DNA supercoils. Finally, in the religation step, the DNA 5'-OH attacks the covalent intermediate to expel the active-site tyrosine and restore the DNA phosphodiester backbone. This is DNA topoisomerase 1 (TOP1) from Oryctolagus cuniculus (Rabbit).